Consider the following 156-residue polypeptide: ATP synthase subunit b (156 aa).

A helical transmembrane segment spans residues 11–31 (AIAFVLFVLFCMKYVWPPLMA).

It belongs to the ATPase B chain family. F-type ATPases have 2 components, F(1) - the catalytic core - and F(0) - the membrane proton channel. F(1) has five subunits: alpha(3), beta(3), gamma(1), delta(1), epsilon(1). F(0) has three main subunits: a(1), b(2) and c(10-14). The alpha and beta chains form an alternating ring which encloses part of the gamma chain. F(1) is attached to F(0) by a central stalk formed by the gamma and epsilon chains, while a peripheral stalk is formed by the delta and b chains.

It localises to the cell inner membrane. Its function is as follows. F(1)F(0) ATP synthase produces ATP from ADP in the presence of a proton or sodium gradient. F-type ATPases consist of two structural domains, F(1) containing the extramembraneous catalytic core and F(0) containing the membrane proton channel, linked together by a central stalk and a peripheral stalk. During catalysis, ATP synthesis in the catalytic domain of F(1) is coupled via a rotary mechanism of the central stalk subunits to proton translocation. Component of the F(0) channel, it forms part of the peripheral stalk, linking F(1) to F(0). The sequence is that of ATP synthase subunit b from Shigella boydii serotype 18 (strain CDC 3083-94 / BS512).